Here is a 174-residue protein sequence, read N- to C-terminus: RNA pyrophosphohydrolase (174 aa).

Residues 6-149 (GYRPNVGIIL…KRDVYLGALK (144 aa)) form the Nudix hydrolase domain. Residues 38-59 (GGIKPGESPETAMYRELYEEVG) carry the Nudix box motif.

It belongs to the Nudix hydrolase family. RppH subfamily. A divalent metal cation is required as a cofactor.

Accelerates the degradation of transcripts by removing pyrophosphate from the 5'-end of triphosphorylated RNA, leading to a more labile monophosphorylated state that can stimulate subsequent ribonuclease cleavage. In Neisseria meningitidis serogroup A / serotype 4A (strain DSM 15465 / Z2491), this protein is RNA pyrophosphohydrolase.